The chain runs to 208 residues: Putative 3-methyladenine DNA glycosylase (208 aa).

Belongs to the DNA glycosylase MPG family.

The sequence is that of Putative 3-methyladenine DNA glycosylase from Prosthecochloris aestuarii (strain DSM 271 / SK 413).